Reading from the N-terminus, the 262-residue chain is Ribosomal RNA small subunit methyltransferase A (262 aa).

The S-adenosyl-L-methionine site is built by His16, Leu18, Gly43, Glu64, Asp89, and Asn109.

It belongs to the class I-like SAM-binding methyltransferase superfamily. rRNA adenine N(6)-methyltransferase family. RsmA subfamily.

Its subcellular location is the cytoplasm. It carries out the reaction adenosine(1518)/adenosine(1519) in 16S rRNA + 4 S-adenosyl-L-methionine = N(6)-dimethyladenosine(1518)/N(6)-dimethyladenosine(1519) in 16S rRNA + 4 S-adenosyl-L-homocysteine + 4 H(+). Functionally, specifically dimethylates two adjacent adenosines (A1518 and A1519) in the loop of a conserved hairpin near the 3'-end of 16S rRNA in the 30S particle. May play a critical role in biogenesis of 30S subunits. The sequence is that of Ribosomal RNA small subunit methyltransferase A from Xanthomonas campestris pv. campestris (strain 8004).